The sequence spans 744 residues: Integrator complex subunit 11 homolog (744 aa).

Positions 67, 69, 71, 72, 156, and 177 each coordinate Zn(2+). The HXHXDH motif motif lies at 67 to 72; sequence HFHLDH. Residue Glu-202 is part of the active site. Residue His-425 coordinates Zn(2+). Residues 626 to 669 form a disordered region; it reads NNNTSDDNNNNNNNNNNNNNNNNNNNNNNNNNNNNNNNNNNNNN.

Belongs to the metallo-beta-lactamase superfamily. RNA-metabolizing metallo-beta-lactamase-like family. INTS11 subfamily. As to quaternary structure, component of the Integrator complex. The core complex associates with protein phosphatase 2A subunits, to form the Integrator-PP2A (INTAC) complex. Zn(2+) is required as a cofactor.

Its subcellular location is the nucleus. The protein localises to the cytoplasm. Functionally, RNA endonuclease component of the integrator complex, a multiprotein complex that terminates RNA polymerase II (Pol II) transcription in the promoter-proximal region of genes. The integrator complex provides a quality checkpoint during transcription elongation by driving premature transcription termination of transcripts that are unfavorably configured for transcriptional elongation: the complex terminates transcription by (1) catalyzing dephosphorylation of the C-terminal domain (CTD) of Pol II subunit polr2a, (2) degrading the exiting nascent RNA transcript via endonuclease activity and (3) promoting the release of Pol II from bound DNA. The integrator complex is also involved in terminating the synthesis of non-coding Pol II transcripts, such as enhancer RNAs (eRNAs), small nuclear RNAs (snRNAs), telomerase RNAs and long non-coding RNAs (lncRNAs). Within the integrator complex, INTS11 constitutes the RNA endonuclease subunit that degrades exiting nascent RNA transcripts. This is Integrator complex subunit 11 homolog (ints11) from Dictyostelium discoideum (Social amoeba).